The chain runs to 829 residues: Probable receptor-like protein kinase At5g59700 (829 aa).

The first 24 residues, 1–24 (MGGEKFGFLIWILSIPCLIFLCYG), serve as a signal peptide directing secretion. The Extracellular segment spans residues 25-406 (YVPVDNYLIN…SSTTKKNVGM (382 aa)). Residues Asn-40, Asn-216, Asn-279, and Asn-380 are each glycosylated (N-linked (GlcNAc...) asparagine). A helical membrane pass occupies residues 407–427 (IIGLTIGSLLALVVLGGFFVL). The Cytoplasmic portion of the chain corresponds to 428–829 (YKKRGRDQDG…FSQLIKSEGR (402 aa)). Residues 482–755 (FDENRAIGVG…GDVLWNLEYA (274 aa)) enclose the Protein kinase domain. ATP-binding positions include 488-496 (IGVGGFGKV) and Lys-510. Asp-606 (proton acceptor) is an active-site residue.

Belongs to the protein kinase superfamily. Ser/Thr protein kinase family.

It localises to the cell membrane. The chain is Probable receptor-like protein kinase At5g59700 from Arabidopsis thaliana (Mouse-ear cress).